A 158-amino-acid polypeptide reads, in one-letter code: U4/U6.U5 small nuclear ribonucleoprotein 27 kDa protein (158 aa).

Positions 1–102 (MGRSRSRSPE…AEDLEGKTEE (102 aa)) are disordered. Over residues 13–59 (RERRRSRSASRERERRRRERSRSRERRRSRSRSPHRRRSRSPRRHRS) the composition is skewed to basic residues. Residues 66 to 101 (RLKDRRDDDKKEPKESKGGGSKERQLAAEDLEGKTE) are compositionally biased toward basic and acidic residues.

Belongs to the SNUT3 family. Part of a tri-snRNP complex.

The protein resides in the nucleus. May play a role in mRNA splicing. The chain is U4/U6.U5 small nuclear ribonucleoprotein 27 kDa protein (snrnp27) from Xenopus laevis (African clawed frog).